Consider the following 63-residue polypeptide: Large ribosomal subunit protein bL35 (63 aa).

Belongs to the bacterial ribosomal protein bL35 family.

The sequence is that of Large ribosomal subunit protein bL35 from Sulfurimonas denitrificans (strain ATCC 33889 / DSM 1251) (Thiomicrospira denitrificans (strain ATCC 33889 / DSM 1251)).